The chain runs to 226 residues: Pyridoxal 5'-phosphate synthase subunit PdxT (226 aa).

L-glutamine is bound at residue 60-62; the sequence is GES. The active-site Nucleophile is the Cys-92. L-glutamine-binding positions include Arg-121 and 150–151; that span reads IR. Residues His-191 and Glu-193 each act as charge relay system in the active site.

It belongs to the glutaminase PdxT/SNO family. In terms of assembly, in the presence of PdxS, forms a dodecamer of heterodimers. Only shows activity in the heterodimer.

It catalyses the reaction aldehydo-D-ribose 5-phosphate + D-glyceraldehyde 3-phosphate + L-glutamine = pyridoxal 5'-phosphate + L-glutamate + phosphate + 3 H2O + H(+). The enzyme catalyses L-glutamine + H2O = L-glutamate + NH4(+). It functions in the pathway cofactor biosynthesis; pyridoxal 5'-phosphate biosynthesis. In terms of biological role, catalyzes the hydrolysis of glutamine to glutamate and ammonia as part of the biosynthesis of pyridoxal 5'-phosphate. The resulting ammonia molecule is channeled to the active site of PdxS. The protein is Pyridoxal 5'-phosphate synthase subunit PdxT of Nocardia farcinica (strain IFM 10152).